Here is a 516-residue protein sequence, read N- to C-terminus: Putative Rieske 2Fe-2S iron-sulfur protein MT3926 (516 aa).

A Rieske domain is found at 429–516; that stretch reads LYTFFKCLTD…RGHQLRSSRP (88 aa). [2Fe-2S] cluster contacts are provided by C469, H471, C489, and H492.

The cofactor is [2Fe-2S] cluster.

The chain is Putative Rieske 2Fe-2S iron-sulfur protein MT3926 from Mycobacterium tuberculosis (strain CDC 1551 / Oshkosh).